A 919-amino-acid chain; its full sequence is Isoleucine--tRNA ligase (919 aa).

The 'HIGH' region signature appears at 57-67 (PYANGNIHIGH). Glu569 lines the L-isoleucyl-5'-AMP pocket. A 'KMSKS' region motif is present at residues 610–614 (KMSKS). Residue Lys613 coordinates ATP. Zn(2+) contacts are provided by Cys896, Cys899, Cys911, and Cys914.

The protein belongs to the class-I aminoacyl-tRNA synthetase family. IleS type 1 subfamily. In terms of assembly, monomer. Zn(2+) serves as cofactor.

The protein resides in the cytoplasm. It catalyses the reaction tRNA(Ile) + L-isoleucine + ATP = L-isoleucyl-tRNA(Ile) + AMP + diphosphate. Its function is as follows. Catalyzes the attachment of isoleucine to tRNA(Ile). As IleRS can inadvertently accommodate and process structurally similar amino acids such as valine, to avoid such errors it has two additional distinct tRNA(Ile)-dependent editing activities. One activity is designated as 'pretransfer' editing and involves the hydrolysis of activated Val-AMP. The other activity is designated 'posttransfer' editing and involves deacylation of mischarged Val-tRNA(Ile). In Aliarcobacter butzleri (strain RM4018) (Arcobacter butzleri), this protein is Isoleucine--tRNA ligase.